The chain runs to 207 residues: Nucleoplasmin-2 (207 aa).

A compositionally biased stretch (polar residues) spans M1–K15. Disordered stretches follow at residues M1–G20 and D121–K207. The segment covering T123–L147 has biased composition (acidic residues). An acidic tract A2 region spans residues E129 to V152. Positions S165 to V180 match the Bipartite nuclear localization signal motif. Positions P198 to K207 are enriched in basic residues.

It belongs to the nucleoplasmin family. Homopentamer, when bound to H2A-H2B dimers only. Homodecamer of two stacked pentamers, when bound to H2A-H2B dimers and H3-H4 tetramers simultaneously. In terms of tissue distribution, ovary specific.

Its subcellular location is the nucleus. Functionally, core histones chaperone involved in chromatin reprogramming, specially during fertilization and early embryonic development. Probably involved in sperm DNA decondensation during fertilization. The protein is Nucleoplasmin-2 (Npm2) of Mus musculus (Mouse).